The sequence spans 620 residues: 1-deoxy-D-xylulose-5-phosphate synthase (620 aa).

Thiamine diphosphate is bound by residues His80 and 121–123 (GHS). Asp152 serves as a coordination point for Mg(2+). Thiamine diphosphate is bound by residues 153–154 (GA), Asn181, Tyr288, and Glu370. Residue Asn181 coordinates Mg(2+).

It belongs to the transketolase family. DXPS subfamily. Homodimer. Mg(2+) serves as cofactor. Thiamine diphosphate is required as a cofactor.

It carries out the reaction D-glyceraldehyde 3-phosphate + pyruvate + H(+) = 1-deoxy-D-xylulose 5-phosphate + CO2. Its pathway is metabolic intermediate biosynthesis; 1-deoxy-D-xylulose 5-phosphate biosynthesis; 1-deoxy-D-xylulose 5-phosphate from D-glyceraldehyde 3-phosphate and pyruvate: step 1/1. In terms of biological role, catalyzes the acyloin condensation reaction between C atoms 2 and 3 of pyruvate and glyceraldehyde 3-phosphate to yield 1-deoxy-D-xylulose-5-phosphate (DXP). The protein is 1-deoxy-D-xylulose-5-phosphate synthase of Salmonella heidelberg (strain SL476).